Here is a 379-residue protein sequence, read N- to C-terminus: MSQNASVGIVTPQKIPFEMPLVLENGKTLPRFDLMIETYGELNAEKNNAVLICHALSGNHHVAGRHSAEDKYTGWWDNMVGPGKPIDTERFFVVGLNNLGGCDGSSGPLSINPETGREYGADFPVVTVKDWVKSQAALTDYLGIGQWAAVVGGSLGGMQALQWTISYPERVRHALVIASAPKLSTQNIAFNDVARQAILTDPDFNEGHYRSRNTVPARGLRIARMMGHITYLAEDGLGKKFGRDLRSNGYQYGYGVEFEVESYLRYQGDKFVGRFDANTYLLMTKALDYFDPAADFGNSLTRAVQDVQAKFFVASFSTDWRFAPERSHELVKALIAAQKSVQYIEVKSAHGHDAFLMEDEAYMRAVAAYMNNVYKECQQ.

The region spanning 48–357 (NAVLICHALS…SAHGHDAFLM (310 aa)) is the AB hydrolase-1 domain. Residue Ser-154 is the Nucleophile of the active site. Arg-224 contacts substrate. Active-site residues include Asp-319 and His-352. Asp-353 provides a ligand contact to substrate.

It belongs to the AB hydrolase superfamily. MetX family. As to quaternary structure, homodimer.

Its subcellular location is the cytoplasm. The catalysed reaction is L-homoserine + succinyl-CoA = O-succinyl-L-homoserine + CoA. Its pathway is amino-acid biosynthesis; L-methionine biosynthesis via de novo pathway; O-succinyl-L-homoserine from L-homoserine: step 1/1. In terms of biological role, transfers a succinyl group from succinyl-CoA to L-homoserine, forming succinyl-L-homoserine. This chain is Homoserine O-succinyltransferase, found in Neisseria meningitidis serogroup A / serotype 4A (strain DSM 15465 / Z2491).